Here is a 305-residue protein sequence, read N- to C-terminus: MQLFIILCLAGSAVQLEGTELDGVERADNRRPIWNIAHMVNDKGLIDEYLDDGANSVESDVSFDSNGKPEKMLHGSPCDCGRSCKRQMSFADYLDYMRQLTTPGDPKFRENLILVMLDLKLKKLSSEQAYSAGQEVASQMLDKYWKRGESGARAYIVLSIPTITRVTFVNGFYDKLHSEGFDQYREKVGVDFSGNEDLEDTGKILKSRDILDHIWQSDGITNCLFRIMKRLKAAIRKRDSNGYMVKVYTWSVDKYTTMRKALRAGADGMITNFPKRLVSVLNEREFSGKFRLATYNDNPWERYTG.

The signal sequence occupies residues 1 to 18; that stretch reads MQLFIILCLAGSAVQLEG. Residues 19-26 constitute a propeptide that is removed on maturation; it reads TELDGVER. Residue His38 is part of the active site. Residues Glu58 and Asp60 each contribute to the Mg(2+) site. The active-site Nucleophile is the His74. Cystine bridges form between Cys78–Cys84 and Cys80–Cys223. Mg(2+) is bound at residue Asp118.

It belongs to the arthropod phospholipase D family. Class II subfamily. Class IIb sub-subfamily. The cofactor is Mg(2+). As to expression, expressed by the venom gland.

The protein resides in the secreted. The enzyme catalyses an N-(acyl)-sphingosylphosphocholine = an N-(acyl)-sphingosyl-1,3-cyclic phosphate + choline. The catalysed reaction is an N-(acyl)-sphingosylphosphoethanolamine = an N-(acyl)-sphingosyl-1,3-cyclic phosphate + ethanolamine. It catalyses the reaction a 1-acyl-sn-glycero-3-phosphocholine = a 1-acyl-sn-glycero-2,3-cyclic phosphate + choline. It carries out the reaction a 1-acyl-sn-glycero-3-phosphoethanolamine = a 1-acyl-sn-glycero-2,3-cyclic phosphate + ethanolamine. Dermonecrotic toxins cleave the phosphodiester linkage between the phosphate and headgroup of certain phospholipids (sphingolipid and lysolipid substrates), forming an alcohol (often choline) and a cyclic phosphate. This toxin acts on sphingomyelin (SM) with low activity. It may also act on ceramide phosphoethanolamine (CPE), lysophosphatidylcholine (LPC) and lysophosphatidylethanolamine (LPE), but not on lysophosphatidylserine (LPS), and lysophosphatidylglycerol (LPG). It acts by transphosphatidylation, releasing exclusively cyclic phosphate products as second products. Has no or weak activities in inducing dermonecrosis, hemolysis, inflammatory response, platelet aggregation and increase in vessel permeability. In vivo, shows no lethality when injected at higher dose into mice. This is Dermonecrotic toxin LiSicTox-betaID1 from Loxosceles intermedia (Brown spider).